The sequence spans 138 residues: Large ribosomal subunit protein uL16 (138 aa).

The segment covering 1-14 (MLQPKRTKYRRTHR) has biased composition (basic residues). Residues 1-24 (MLQPKRTKYRRTHRLQHDKGEAHT) form a disordered region. Over residues 15-24 (LQHDKGEAHT) the composition is skewed to basic and acidic residues.

The protein belongs to the universal ribosomal protein uL16 family. In terms of assembly, part of the 50S ribosomal subunit.

In terms of biological role, binds 23S rRNA and is also seen to make contacts with the A and possibly P site tRNAs. The sequence is that of Large ribosomal subunit protein uL16 from Mycoplasma mobile (strain ATCC 43663 / 163K / NCTC 11711) (Mesomycoplasma mobile).